Consider the following 681-residue polypeptide: Conserved oligomeric Golgi complex subunit 2 (681 aa).

This sequence belongs to the COG2 family. In terms of assembly, component of the conserved oligomeric Golgi complex which is composed of eight different subunits and is required for normal Golgi morphology and localization.

Its subcellular location is the golgi apparatus membrane. Its function is as follows. Required for normal Golgi morphology and function. The polypeptide is Conserved oligomeric Golgi complex subunit 2 (cogc-2) (Caenorhabditis elegans).